The following is a 183-amino-acid chain: uncharacterized protein (183 aa).

In terms of domain architecture, SIS spans 27-170 (MIKLIDSARS…VAEIMMQKHL (144 aa)).

The protein belongs to the SIS family. PHI subfamily.

This is an uncharacterized protein from Archaeoglobus fulgidus (strain ATCC 49558 / DSM 4304 / JCM 9628 / NBRC 100126 / VC-16).